A 542-amino-acid chain; its full sequence is Chaperonin GroEL (542 aa).

Residues 29-32, 86-90, Gly413, 476-478, and Asp492 each bind ATP; these read TLGP, DGTTT, and NAA.

Belongs to the chaperonin (HSP60) family. Forms a cylinder of 14 subunits composed of two heptameric rings stacked back-to-back. Interacts with the co-chaperonin GroES.

The protein localises to the cytoplasm. It carries out the reaction ATP + H2O + a folded polypeptide = ADP + phosphate + an unfolded polypeptide.. Its function is as follows. Together with its co-chaperonin GroES, plays an essential role in assisting protein folding. The GroEL-GroES system forms a nano-cage that allows encapsulation of the non-native substrate proteins and provides a physical environment optimized to promote and accelerate protein folding. The chain is Chaperonin GroEL from Listeria welshimeri serovar 6b (strain ATCC 35897 / DSM 20650 / CCUG 15529 / CIP 8149 / NCTC 11857 / SLCC 5334 / V8).